The chain runs to 517 residues: DNA primase DnaG (517 aa).

The Toprim domain maps to 171 to 257 (DAIIILEGRA…CVEDLVQKEV (87 aa)). Mg(2+) is bound by residues Glu-177, Asp-219, and Asp-221.

Belongs to the archaeal DnaG primase family. Forms a ternary complex with MCM helicase and DNA. Component of the archaeal exosome complex. The cofactor is Mg(2+).

The catalysed reaction is ssDNA + n NTP = ssDNA/pppN(pN)n-1 hybrid + (n-1) diphosphate.. Functionally, RNA polymerase that catalyzes the synthesis of short RNA molecules used as primers for DNA polymerase during DNA replication. Also part of the exosome, which is a complex involved in RNA degradation. Acts as a poly(A)-binding protein that enhances the interaction between heteromeric, adenine-rich transcripts and the exosome. This is DNA primase DnaG from Methanosarcina barkeri (strain Fusaro / DSM 804).